Reading from the N-terminus, the 722-residue chain is Transcription factor kayak, isoforms D/sro (722 aa).

The segment covering 173–188 (QHQTQQQHQSQQQQQH) has biased composition (low complexity). Disordered regions lie at residues 173–193 (QHQT…RQDY), 283–317 (LGQG…HTDS), and 350–407 (GSAS…KRRV). The segment covering 283 to 300 (LGQGSESEDSNASYNDTQ) has biased composition (polar residues). 2 stretches are compositionally biased toward low complexity: residues 308–317 (TDTSSAHTDS) and 350–364 (GSAS…TSNT). Residues 385 to 448 (EQKRAVRRER…NQLEYLLATH (64 aa)) enclose the bZIP domain. Positions 387–406 (KRAVRRERNKQAAARCRKRR) are basic motif. A leucine-zipper region spans residues 413–420 (LTEEVEQL). The span at 477–498 (AGSSGSGASSHHNHNSNDSSNG) shows a compositional bias: low complexity. Disordered regions lie at residues 477 to 519 (AGSS…PLDL) and 683 to 722 (DGGT…LVSL). Polar residues predominate over residues 506-516 (TLNSTGRSNSP). Serine 515 is subject to Phosphoserine.

It belongs to the bZIP family. Fos subfamily. In terms of assembly, homodimer. Heterodimer with Jra. The kay-Jra heterodimer binds more stably to the AP-1 site than either of the two proteins alone.

The protein localises to the nucleus. Functionally, developmentally regulated transcription factor AP-1 binds and recognizes the enhancer DNA sequence: 5'-TGA[CG]TCA-3'. May play a role in the function or determination of a particular subset of cells in the developing embryo. It is able to carry out its function either independently of or in conjunction with Jra. This is Transcription factor kayak, isoforms D/sro from Drosophila melanogaster (Fruit fly).